Here is a 291-residue protein sequence, read N- to C-terminus: Protein US2 (291 aa).

An N-acetylglycine; by host; partial modification is found at G2. The disordered stretch occupies residues 251-270 (PEVPDEQPTSPGRGPQETDP).

Belongs to the herpesviridae HHV-1 US2 protein family. In terms of assembly, interacts with host KRT18.

It localises to the host cytoplasm. The protein resides in the host nucleus. The chain is Protein US2 from Homo sapiens (Human).